Reading from the N-terminus, the 99-residue chain is Pterin-4-alpha-carbinolamine dehydratase (99 aa).

Belongs to the pterin-4-alpha-carbinolamine dehydratase family.

The enzyme catalyses (4aS,6R)-4a-hydroxy-L-erythro-5,6,7,8-tetrahydrobiopterin = (6R)-L-erythro-6,7-dihydrobiopterin + H2O. Its function is as follows. Involved in tetrahydrobiopterin biosynthesis. The chain is Pterin-4-alpha-carbinolamine dehydratase (pcbd) from Dictyostelium discoideum (Social amoeba).